The following is a 298-amino-acid chain: Distal tail protein (298 aa).

This sequence belongs to the skunalikevirus distal tail protein family. In terms of assembly, homohexamer. Interacts with the receptor binding protein.

The protein localises to the virion. Forms the distal part of the tail. Self-associates as two rings organized back to back, with a central channel allowing DNA ejection. In Lactococcus lactis (Lactococcus lactis bacteriophage p2), this protein is Distal tail protein.